Here is an 88-residue protein sequence, read N- to C-terminus: DNA-directed RNA polymerase subunit omega (88 aa).

The protein belongs to the RNA polymerase subunit omega family. In terms of assembly, the RNAP catalytic core consists of 2 alpha, 1 beta, 1 beta' and 1 omega subunit. When a sigma factor is associated with the core the holoenzyme is formed, which can initiate transcription.

The catalysed reaction is RNA(n) + a ribonucleoside 5'-triphosphate = RNA(n+1) + diphosphate. Functionally, promotes RNA polymerase assembly. Latches the N- and C-terminal regions of the beta' subunit thereby facilitating its interaction with the beta and alpha subunits. This is DNA-directed RNA polymerase subunit omega from Thermobifida fusca (strain YX).